We begin with the raw amino-acid sequence, 245 residues long: tRNA (guanine-N(1)-)-methyltransferase (245 aa).

S-adenosyl-L-methionine contacts are provided by residues Gly-111 and 131-136 (IGDYVL).

This sequence belongs to the RNA methyltransferase TrmD family. In terms of assembly, homodimer.

The protein resides in the cytoplasm. The catalysed reaction is guanosine(37) in tRNA + S-adenosyl-L-methionine = N(1)-methylguanosine(37) in tRNA + S-adenosyl-L-homocysteine + H(+). Specifically methylates guanosine-37 in various tRNAs. This chain is tRNA (guanine-N(1)-)-methyltransferase, found in Caldicellulosiruptor saccharolyticus (strain ATCC 43494 / DSM 8903 / Tp8T 6331).